Consider the following 632-residue polypeptide: 2-hydroxyacyl-CoA lyase 2 (632 aa).

A helical membrane pass occupies residues 13 to 33; sequence FFPSFLLLAFGTLVAAVLGVA. Glu98 is a binding site for thiamine diphosphate. Ser369 is subject to Phosphoserine. Residues 470-550 form a thiamine pyrophosphate binding region; it reads DFVATAAYLV…VIALVGNDAG (81 aa). 2 residues coordinate Mg(2+): Asp521 and Asn547.

The protein belongs to the TPP enzyme family. Requires Mg(2+) as cofactor. The cofactor is thiamine diphosphate.

It localises to the endoplasmic reticulum membrane. The enzyme catalyses 2-hydroxyoctadecanoyl-CoA = heptadecanal + formyl-CoA. It carries out the reaction (2R)-hydroxyhexadecanoyl-CoA = pentadecanal + formyl-CoA. In terms of biological role, endoplasmic reticulum 2-OH acyl-CoA lyase involved in the cleavage (C1 removal) reaction in the fatty acid alpha-oxydation in a thiamine pyrophosphate (TPP)-dependent manner. Involved in the phytosphingosine degradation pathway. This is 2-hydroxyacyl-CoA lyase 2 (Ilvbl) from Mus musculus (Mouse).